We begin with the raw amino-acid sequence, 318 residues long: MESYGRKRAWKKGPTRGKGGPQNAACEYRGVRQRTWGKWVAEIREPNKRTRLWLGSFATAEEAALAYDEAARRLYGPDAFLNLPHLRAASAAAAHQRLRWLPASAAAAAARGGAAAVPAYGLLNLNAQHNVHVIHQRLQELKNSSSSPTKPPPRTPTRANPPPPPLPTSSPCSTVTNSVGSAALPPPMSCFQALEQAMAATAAMESAPCDDDAAVVGFGADKPQLDLKEFLQQIGVLKADDDGATGKNGAVHGDDGELADAFGFGGSGEFDWDALAADMSDIAGGHGGALGANGGFQMDDLHEVEQFGGCMPIPIWDI.

The span at 1–15 shows a compositional bias: basic residues; sequence MESYGRKRAWKKGPT. Positions 1-24 are disordered; it reads MESYGRKRAWKKGPTRGKGGPQNA. Residues 27–84 constitute a DNA-binding region (AP2/ERF); sequence EYRGVRQRTWGKWVAEIREPNKRTRLWLGSFATAEEAALAYDEAARRLYGPDAFLNLP. Positions 140 to 178 are disordered; that stretch reads ELKNSSSSPTKPPPRTPTRANPPPPPLPTSSPCSTVTNS. Positions 149-168 are enriched in pro residues; it reads TKPPPRTPTRANPPPPPLPT.

It belongs to the AP2/ERF transcription factor family. ERF subfamily.

It localises to the nucleus. Probable transcriptional activator that binds to the DNA sequence 5'-[AG]CCGAC-3' of the cis-acting dehydration-responsive element (DRE). The protein is Dehydration-responsive element-binding protein 2E (DREB2E) of Oryza sativa subsp. japonica (Rice).